Consider the following 32-residue polypeptide: Zinc metalloproteinase/disintegrin-like CdtV1 (32 aa).

2 cysteine pairs are disulfide-bonded: cysteine 5–cysteine 14 and cysteine 7–cysteine 15.

It belongs to the venom metalloproteinase (M12B) family. P-II subfamily. P-IIa sub-subfamily. As to quaternary structure, monomer. In terms of tissue distribution, expressed by the venom gland.

Its subcellular location is the secreted. Functionally, snake venom metalloproteinase that impairs hemostasis in the envenomed animal. The sequence is that of Zinc metalloproteinase/disintegrin-like CdtV1 from Crotalus durissus terrificus (South American rattlesnake).